A 419-amino-acid chain; its full sequence is Double-stranded RNA-binding protein 1 (419 aa).

2 consecutive DRBM domains span residues 15-84 (VFKS…ELAK) and 101-170 (LCKN…AIQS). The short motif at 207–222 (KARKAQFKKKAQKGKR) is the Bipartite nuclear localization element. A run of 6 repeats spans residues 247 to 274 (EKIETTPNLEPSSCMNGLKEAAFGSVET), 275 to 302 (EKIETTPNLEPPSCMNGLKEAAFGSVET), 303 to 330 (EKIETTPNLEPPSCMNGLKEAAFGSVET), 331 to 358 (EKIETTPNLEPSSCMNGLKEAAFGSVET), 359 to 386 (EKIETTPNLEPPSCMNGLKEAAFGSVET), and 387 to 414 (EKIETTPNLESSSCMSGLKEAAFGSVET). Residues 247 to 414 (EKIETTPNLE…KEAAFGSVET (168 aa)) are 6 X 28 AA repeats of E-K-I-E-T-T-P-N-L-E-[PS]-[PS]-S-C-M-[NS]-G-L-K-E-A-A-F-G-S-V-E-T.

Homodimer. Heterodimer with DRB2, DRB4 or DRB5. Interacts with SE and DCL1. Interacts with RCF3, RS40 and RS41. As to expression, expressed in rosette and cauline leaves, stems, roots, flowers and siliques.

The protein resides in the nucleus. It localises to the nucleus speckle. Double-stranded RNA-binding protein involved in RNA-mediated post-transcriptional gene silencing (PTGS). Functions in the microRNAs (miRNAs) biogenesis by assisting DICER-LIKE 1 (DCL1) in the accurate processing from primary miRNAs (pri-miRNAs) to miRNAs in the nucleus. Forms a complex with SERRATE (SE) and DCL1 to promote accurate processing of pri-miRNAs by DCL1. Binds and assist DCL1 for accurate processing of precursor miRNAs (pre-miRNA). Indirectly involved in the production of trans-acting small interfering RNAs (ta-siRNAs) derived from the TAS1, TAS2 or TAS3 endogenous transcripts by participating in the production of their initiating miRNAs. Involved with argonaute 1 (AGO1) in the guide strand selection from miRNA duplexes, presumably by directional loading of the miRNA duplex (guide stand and passenger strand) onto the RNA-induced silencing complex (RISC) for passenger strand degradation. Does not participate in sense transgene-induced post-transcriptional gene silencing (S-PTGS). Involved in several plant development aspects and response to hormones through its role in miRNAs processing. This chain is Double-stranded RNA-binding protein 1 (DRB1), found in Arabidopsis thaliana (Mouse-ear cress).